A 171-amino-acid polypeptide reads, in one-letter code: S-ribosylhomocysteine lyase (171 aa).

Residues His54, His58, and Cys128 each contribute to the Fe cation site.

It belongs to the LuxS family. In terms of assembly, homodimer. The cofactor is Fe cation.

The catalysed reaction is S-(5-deoxy-D-ribos-5-yl)-L-homocysteine = (S)-4,5-dihydroxypentane-2,3-dione + L-homocysteine. Functionally, involved in the synthesis of autoinducer 2 (AI-2) which is secreted by bacteria and is used to communicate both the cell density and the metabolic potential of the environment. The regulation of gene expression in response to changes in cell density is called quorum sensing. Catalyzes the transformation of S-ribosylhomocysteine (RHC) to homocysteine (HC) and 4,5-dihydroxy-2,3-pentadione (DPD). This Escherichia fergusonii (strain ATCC 35469 / DSM 13698 / CCUG 18766 / IAM 14443 / JCM 21226 / LMG 7866 / NBRC 102419 / NCTC 12128 / CDC 0568-73) protein is S-ribosylhomocysteine lyase.